Consider the following 691-residue polypeptide: Elongation factor G (691 aa).

Residues 8–282 enclose the tr-type G domain; the sequence is ERVRNIGIAA…AVVDYLPAPV (275 aa). Residues 17–24, 81–85, and 135–138 each bind GTP; these read AHIDAGKT, DTPGH, and NKMD.

Belongs to the TRAFAC class translation factor GTPase superfamily. Classic translation factor GTPase family. EF-G/EF-2 subfamily.

The protein localises to the cytoplasm. In terms of biological role, catalyzes the GTP-dependent ribosomal translocation step during translation elongation. During this step, the ribosome changes from the pre-translocational (PRE) to the post-translocational (POST) state as the newly formed A-site-bound peptidyl-tRNA and P-site-bound deacylated tRNA move to the P and E sites, respectively. Catalyzes the coordinated movement of the two tRNA molecules, the mRNA and conformational changes in the ribosome. The polypeptide is Elongation factor G (Prochlorococcus marinus (strain AS9601)).